A 423-amino-acid chain; its full sequence is Mannitol-1-phosphate 5-dehydrogenase (423 aa).

Zn(2+) is bound by residues C40, H69, and E70.

This sequence belongs to the zinc-containing alcohol dehydrogenase family. The cofactor is Zn(2+).

The enzyme catalyses D-mannitol 1-phosphate + NAD(+) = beta-D-fructose 6-phosphate + NADH + H(+). Seems to be involved in mannitol utilization. Complements an E.coli mtlD deletion mutant. This chain is Mannitol-1-phosphate 5-dehydrogenase, found in Aliivibrio fischeri (strain ATCC 700601 / ES114) (Vibrio fischeri).